Consider the following 80-residue polypeptide: Serine palmitoyltransferase small subunit A-A (80 aa).

Topologically, residues 1 to 21 (MKVLCEDVNGPRSSLGRAWSH) are cytoplasmic. Residues 22–38 (MSWLYYQYLLVTALYML) form a helical membrane-spanning segment. Residues 39–43 (EPWER) lie on the Lumenal side of the membrane. A helical membrane pass occupies residues 44-66 (TVFNSMLVSIVGMALYTGYIFMP). Residues 67-80 (QHILAILHYFEIVQ) lie on the Cytoplasmic side of the membrane.

This sequence belongs to the SPTSS family. SPTSSA subfamily. In terms of assembly, component of the serine palmitoyltransferase (SPT) complex, which is composed of SPTLC1, SPTLC2 or SPTLC3 and SPTSSA or SPTSSB. The heterodimer consisting of SPTLC1 and SPTLC2/SPTLC3 forms the catalytic core of the enzyme, while SPTSSA or SPTSSB subunits determine substrate specificity. SPT also interacts with ORMDL proteins, especially ORMDL3, which negatively regulate SPT activity in the presence of ceramides.

The protein resides in the endoplasmic reticulum membrane. The protein operates within lipid metabolism; sphingolipid metabolism. Component of the serine palmitoyltransferase multisubunit enzyme (SPT) that catalyzes the initial and rate-limiting step in sphingolipid biosynthesis by condensing L-serine and activated acyl-CoA (most commonly palmitoyl-CoA) to form long-chain bases. The SPT complex is composed of SPTLC1, SPTLC2 or SPTLC3 and SPTSSA or SPTSSB. Within this complex, the heterodimer consisting of SPTLC1 and SPTLC2/SPTLC3 forms the catalytic core. Within the SPT complex, SPTSSA stimulates the catalytic activity and plays a role in substrate specificity, which depends upon the overall complex composition. The SPTLC1-SPTLC2-SPTSSA complex shows a strong preference for C16-CoA substrate, while the SPTLC1-SPTLC3-SPTSSA isozyme uses both C14-CoA and C16-CoA as substrates, with a slight preference for C14-CoA. Independently of its action as a SPT component, may be involved in MBOAT7 localization to mitochondria-associated membranes, a membrane bridge between the endoplasmic reticulum and mitochondria, may hence affect MBOAT7-catalyzed incorporation of arachidonic acid into phosphatidylinositol. This chain is Serine palmitoyltransferase small subunit A-A (sptssa-a), found in Xenopus laevis (African clawed frog).